A 282-amino-acid polypeptide reads, in one-letter code: D-alanine aminotransferase (282 aa).

Residue Y32 participates in substrate binding. Residue R51 participates in pyridoxal 5'-phosphate binding. Residues R99 and H101 each coordinate substrate. K146 acts as the Proton acceptor in catalysis. An N6-(pyridoxal phosphate)lysine modification is found at K146. Residue E178 participates in pyridoxal 5'-phosphate binding.

Belongs to the class-IV pyridoxal-phosphate-dependent aminotransferase family. Homodimer. Requires pyridoxal 5'-phosphate as cofactor.

It carries out the reaction D-alanine + 2-oxoglutarate = D-glutamate + pyruvate. Functionally, acts on the D-isomers of alanine, leucine, aspartate, glutamate, aminobutyrate, norvaline and asparagine. The enzyme transfers an amino group from a substrate D-amino acid to the pyridoxal phosphate cofactor to form pyridoxamine and an alpha-keto acid in the first half-reaction. The second half-reaction is the reverse of the first, transferring the amino group from the pyridoxamine to a second alpha-keto acid to form the product D-amino acid via a ping-pong mechanism. This is an important process in the formation of D-alanine and D-glutamate, which are essential bacterial cell wall components. The sequence is that of D-alanine aminotransferase (dat) from Staphylococcus aureus (strain MW2).